Here is a 91-residue protein sequence, read N- to C-terminus: MQQDKQPDYHPVVFRDRAAGYAFLTRSTATSDKTIEWDDGETYPVVDVEISSESHPFYTGKARTVDSEGRIAQFERRYGSTGPGSDGGGAA.

Belongs to the bacterial ribosomal protein bL31 family. Type B subfamily. In terms of assembly, part of the 50S ribosomal subunit.

This Streptomyces avermitilis (strain ATCC 31267 / DSM 46492 / JCM 5070 / NBRC 14893 / NCIMB 12804 / NRRL 8165 / MA-4680) protein is Large ribosomal subunit protein bL31B-1.